Reading from the N-terminus, the 745-residue chain is Elongation factor G, mitochondrial (745 aa).

Positions 40-317 (ERIRNIGISA…AVLDYLPNPG (278 aa)) constitute a tr-type G domain. Residues 49-56 (AHIDSGKT), 116-120 (DTPGH), and 170-173 (NKLD) each bind GTP.

This sequence belongs to the TRAFAC class translation factor GTPase superfamily. Classic translation factor GTPase family. EF-G/EF-2 subfamily.

The protein localises to the mitochondrion. Its pathway is protein biosynthesis; polypeptide chain elongation. Mitochondrial GTPase that catalyzes the GTP-dependent ribosomal translocation step during translation elongation. During this step, the ribosome changes from the pre-translocational (PRE) to the post-translocational (POST) state as the newly formed A-site-bound peptidyl-tRNA and P-site-bound deacylated tRNA move to the P and E sites, respectively. Catalyzes the coordinated movement of the two tRNA molecules, the mRNA and conformational changes in the ribosome. Essential during development as it acts as a retrograde signal from mitochondria to the nucleus to slow down cell proliferation if mitochondrial energy output is low. The protein is Elongation factor G, mitochondrial of Drosophila erecta (Fruit fly).